Here is a 149-residue protein sequence, read N- to C-terminus: Golgi apparatus membrane protein tvp-18 (149 aa).

A glycan (N-linked (GlcNAc...) asparagine) is linked at N11. The next 4 membrane-spanning stretches (helical) occupy residues 18 to 38 (WLGI…IFTF), 41 to 61 (IIIV…FVEV), 84 to 103 (NYTR…LSCI), and 108 to 128 (SLLV…LAAL).

Belongs to the TVP18 family.

It localises to the golgi apparatus membrane. Functionally, golgi membrane protein involved in vesicular trafficking. This Neurospora crassa (strain ATCC 24698 / 74-OR23-1A / CBS 708.71 / DSM 1257 / FGSC 987) protein is Golgi apparatus membrane protein tvp-18 (tvp-18).